Consider the following 598-residue polypeptide: Arginine--tRNA ligase (598 aa).

Residues 135–145 (ANPTGPIHIGG) carry the 'HIGH' region motif. Positions 229–248 (VDGGTDEKGEPLGEGDSEQR) are disordered. Positions 231–248 (GGTDEKGEPLGEGDSEQR) are enriched in basic and acidic residues.

It belongs to the class-I aminoacyl-tRNA synthetase family. In terms of assembly, monomer.

It is found in the cytoplasm. The catalysed reaction is tRNA(Arg) + L-arginine + ATP = L-arginyl-tRNA(Arg) + AMP + diphosphate. This Bifidobacterium animalis subsp. lactis (strain AD011) protein is Arginine--tRNA ligase.